The following is a 2346-amino-acid chain: Acetyl-CoA carboxylase 1 (2346 aa).

At Met1 the chain carries N-acetylmethionine. Phosphoserine occurs at positions 5, 23, 25, 29, 34, 48, 50, and 53. Residue Thr58 is modified to Phosphothreonine. At Ser78 the chain carries Phosphoserine. A Phosphoserine; by AMPK modification is found at Ser80. Positions 117–618 (VIEKVLIANN…DTGWLDRLIA (502 aa)) constitute a Biotin carboxylation domain. The ATP-grasp domain occupies 275 to 466 (SKRILNVPQE…LPAAQLQIAM (192 aa)). ATP is bound at residue 315–320 (GGGGKG). Positions 424, 437, and 439 each coordinate Mg(2+). Mn(2+)-binding residues include Glu424, Glu437, and Asn439. Arg441 is an active-site residue. Thr610 is subject to Phosphothreonine. A Biotinyl-binding domain is found at 745–819 (FEKENDPSVL…DPGCVIAKMQ (75 aa)). Residue Lys786 is modified to N6-biotinyllysine. 4 positions are modified to phosphoserine: Ser835, Ser1201, Ser1216, and Ser1218. A Phosphothreonine modification is found at Thr1227. Ser1259, Ser1263, and Ser1273 each carry phosphoserine. Residue Lys1334 is modified to N6-acetyllysine. The CoA carboxyltransferase N-terminal domain maps to 1576–1914 (PYVTKDLLQS…SVYSSVPLLN (339 aa)). Residues 1576–2234 (PYVTKDLLQS…EDLVKKKIHN (659 aa)) form a carboxyltransferase region. Arg1823, Lys2127, and Arg2129 together coordinate CoA. In terms of domain architecture, CoA carboxyltransferase C-terminal spans 1918 to 2234 (PIDRVIEFVP…EDLVKKKIHN (317 aa)). Residue Thr2153 is modified to Phosphothreonine.

As to quaternary structure, monomer, homodimer, and homotetramer. Can form filamentous polymers. Interacts in its inactive phosphorylated form with the BRCT domains of BRCA1 which prevents ACACA dephosphorylation and inhibits lipid synthesis. Interacts with MID1IP1; interaction with MID1IP1 promotes oligomerization and increases its activity. Requires Mg(2+) as cofactor. It depends on Mn(2+) as a cofactor. Biotin is required as a cofactor. In terms of processing, phosphorylation on Ser-1263 is required for interaction with BRCA1. Phosphorylation at Ser-80 by AMPK inactivates enzyme activity. Post-translationally, the biotin cofactor is covalently attached to the central biotinyl-binding domain and is required for the catalytic activity. Expressed at high levels in mammary gland.

It is found in the cytoplasm. The protein localises to the cytosol. It carries out the reaction hydrogencarbonate + acetyl-CoA + ATP = malonyl-CoA + ADP + phosphate + H(+). The protein operates within lipid metabolism; malonyl-CoA biosynthesis; malonyl-CoA from acetyl-CoA: step 1/1. With respect to regulation, inhibited by phosphorylation. Citrate promotes oligomerization of the protein into filaments that correspond to the most active form of the carboxylase. Cytosolic enzyme that catalyzes the carboxylation of acetyl-CoA to malonyl-CoA, the first and rate-limiting step of de novo fatty acid biosynthesis. This is a 2 steps reaction starting with the ATP-dependent carboxylation of the biotin carried by the biotin carboxyl carrier (BCC) domain followed by the transfer of the carboxyl group from carboxylated biotin to acetyl-CoA. This is Acetyl-CoA carboxylase 1 from Ovis aries (Sheep).